Reading from the N-terminus, the 180-residue chain is Stathmin-3 (180 aa).

2 S-palmitoyl cysteine lipidation sites follow: Cys-22 and Cys-24. Residues 38–180 (GDMEVKQLDK…NKEQREEMSG (143 aa)) form the SLD domain. A phosphoserine mark is found at Ser-50, Ser-60, Ser-65, Ser-68, Ser-72, Ser-73, and Ser-81. The tract at residues 58–81 (LKSPSDLSPESPVLSSPPKRKDAS) is disordered. Over residues 60–74 (SPSDLSPESPVLSSP) the composition is skewed to low complexity. Residues 75–179 (PKRKDASLEE…RNKEQREEMS (105 aa)) adopt a coiled-coil conformation.

The protein belongs to the stathmin family. In terms of assembly, interacts with STAT3. Interacts with CLU (secreted form); this interaction may act as an important modulator during neuronal differentiation. In terms of processing, N-terminal palmitoylation promotes specific anchoring to the cytosolic leaflet of Golgi membranes and subsequent vesicular trafficking along dendrites and axons. Neuronal Stathmins are substrates for palmitoyltransferases ZDHHC3, ZDHHC7 and ZDHHC15. In terms of tissue distribution, neuron specific.

The protein localises to the golgi apparatus. The protein resides in the cell projection. Its subcellular location is the growth cone. It is found in the axon. It localises to the cytoplasm. The protein localises to the cytosol. Its function is as follows. Exhibits microtubule-destabilizing activity, which is antagonized by STAT3. The sequence is that of Stathmin-3 (Stmn3) from Rattus norvegicus (Rat).